A 270-amino-acid polypeptide reads, in one-letter code: MTQNTVIVNGVAMDSRPSQPTHINVHIHQESALTQLLKAGGSLKKFLFHPGDTVPSTARIGYEQLALGVTQILLGVLSCALGVCLSLGPWTVLRASGCAFWAGSVAIAAGAGAIVHEKYPGKLAGYVSSLLTLAGFATVMAAVVLCVNSFIWQTEPFLYIDTVCDRSDPVIPTTGYGWMWRSEEIQRQKEECRAYMQMLRKLFTAIRALFLAVCVLKVIVSLASLGVGLRNLCGQSSQPLNEEGSEKRLLGENSVPPSPSREQTSTAIVL.

4 helical membrane passes run 65 to 85 (LALG…GVCL), 95 to 115 (ASGC…GAIV), 127 to 147 (VSSL…VLCV), and 209 to 229 (LFLA…GVGL). Phosphoserine occurs at positions 236, 245, 254, and 258. Positions 237 to 270 (SQPLNEEGSEKRLLGENSVPPSPSREQTSTAIVL) are disordered. Residues 260–270 (SREQTSTAIVL) are compositionally biased toward polar residues.

Belongs to the TMEM176 family.

It localises to the nucleus membrane. Functionally, may play a role in the process of maturation of dendritic cells. Required for the development of cerebellar granule cells. The sequence is that of Transmembrane protein 176B (TMEM176B) from Pongo abelii (Sumatran orangutan).